A 304-amino-acid chain; its full sequence is Phosphatidylinositol mannoside acyltransferase (304 aa).

Residue histidine 126 is the Proton acceptor of the active site. Positions 126 and 164 each coordinate hexadecanoyl-CoA. Glutamate 200 is a catalytic residue. Residues serine 206 and glutamate 229 each coordinate hexadecanoyl-CoA.

Belongs to the LpxL/LpxM/LpxP family. Monomer.

It is found in the cell inner membrane. It carries out the reaction a 2,6-O-bis(alpha-D-mannopyranosyl)-1-phosphatidyl-1D-myo-inositol + an acyl-CoA = a 2-O-(alpha-D-mannosyl)-6-O-(6-O-acyl-alpha-D-mannosyl)-1-phosphatidyl-1D-myo-inositol + CoA. The enzyme catalyses a 1,2-diacyl-sn-glycero-3-phospho-[alpha-D-mannopyranosyl-(1&lt;-&gt;6)-D-myo-inositol] + an acyl-CoA = a 1,2-diacyl-sn-glycero-3-phospho-[alpha-D-6-acyl-mannopyranosyl-(1&lt;-&gt;6)-D-myo-inositol] + CoA. The protein operates within phospholipid metabolism; phosphatidylinositol metabolism. Catalyzes the transfer of a palmitoyl moiety from palmitoyl-CoA to the 6-position of the mannose ring linked to the 2-position of myo-inositol in phosphatidyl-myo-inositol monomannoside (PIM1) or dimannoside (PIM2). The chain is Phosphatidylinositol mannoside acyltransferase from Mycolicibacterium smegmatis (strain ATCC 700084 / mc(2)155) (Mycobacterium smegmatis).